The primary structure comprises 103 residues: Regulator of rDNA transcription protein 1 (103 aa).

2 helical membrane-spanning segments follow: residues 9-33 (FLPSILIGYISIRVSLLVWVNWVLV) and 40-57 (VAFIFSLWYFILSIYTFF).

The protein resides in the membrane. Functionally, identified in a screen for mutants with decreased levels of rDNA transcription. The chain is Regulator of rDNA transcription protein 1 (RRT1) from Saccharomyces cerevisiae (strain ATCC 204508 / S288c) (Baker's yeast).